The sequence spans 228 residues: Putative N-acetylmannosamine-6-phosphate 2-epimerase (228 aa).

Belongs to the NanE family.

It catalyses the reaction an N-acyl-D-glucosamine 6-phosphate = an N-acyl-D-mannosamine 6-phosphate. The protein operates within amino-sugar metabolism; N-acetylneuraminate degradation; D-fructose 6-phosphate from N-acetylneuraminate: step 3/5. In terms of biological role, converts N-acetylmannosamine-6-phosphate (ManNAc-6-P) to N-acetylglucosamine-6-phosphate (GlcNAc-6-P). The chain is Putative N-acetylmannosamine-6-phosphate 2-epimerase from Pasteurella multocida (strain Pm70).